Consider the following 227-residue polypeptide: Cytochrome c oxidase subunit 2 (227 aa).

Topologically, residues 1-14 are mitochondrial intermembrane; it reads MAHPMQLGFQDAAS. The chain crosses the membrane as a helical span at residues 15 to 45; that stretch reads PIMEELLYFHDHTLMIVFMISSLVLYIISLM. The Mitochondrial matrix portion of the chain corresponds to 46–59; that stretch reads LSTELTHTSTMDAQ. The chain crosses the membrane as a helical span at residues 60 to 87; the sequence is EVETVWTILPAVILILIALPSLRILYMM. Over 88–227 the chain is Mitochondrial intermembrane; the sequence is DEINTPSMTL…YFEEWLLKSL (140 aa). Residues His-161, Cys-196, Glu-198, Cys-200, His-204, and Met-207 each contribute to the Cu cation site. Glu-198 is a Mg(2+) binding site. Residue Tyr-218 is modified to Phosphotyrosine.

Belongs to the cytochrome c oxidase subunit 2 family. Component of the cytochrome c oxidase (complex IV, CIV), a multisubunit enzyme composed of 14 subunits. The complex is composed of a catalytic core of 3 subunits MT-CO1, MT-CO2 and MT-CO3, encoded in the mitochondrial DNA, and 11 supernumerary subunits COX4I, COX5A, COX5B, COX6A, COX6B, COX6C, COX7A, COX7B, COX7C, COX8 and NDUFA4, which are encoded in the nuclear genome. The complex exists as a monomer or a dimer and forms supercomplexes (SCs) in the inner mitochondrial membrane with NADH-ubiquinone oxidoreductase (complex I, CI) and ubiquinol-cytochrome c oxidoreductase (cytochrome b-c1 complex, complex III, CIII), resulting in different assemblies (supercomplex SCI(1)III(2)IV(1) and megacomplex MCI(2)III(2)IV(2)). Found in a complex with TMEM177, COA6, COX18, COX20, SCO1 and SCO2. Interacts with TMEM177 in a COX20-dependent manner. Interacts with COX20. Interacts with COX16. Cu cation serves as cofactor.

Its subcellular location is the mitochondrion inner membrane. It catalyses the reaction 4 Fe(II)-[cytochrome c] + O2 + 8 H(+)(in) = 4 Fe(III)-[cytochrome c] + 2 H2O + 4 H(+)(out). In terms of biological role, component of the cytochrome c oxidase, the last enzyme in the mitochondrial electron transport chain which drives oxidative phosphorylation. The respiratory chain contains 3 multisubunit complexes succinate dehydrogenase (complex II, CII), ubiquinol-cytochrome c oxidoreductase (cytochrome b-c1 complex, complex III, CIII) and cytochrome c oxidase (complex IV, CIV), that cooperate to transfer electrons derived from NADH and succinate to molecular oxygen, creating an electrochemical gradient over the inner membrane that drives transmembrane transport and the ATP synthase. Cytochrome c oxidase is the component of the respiratory chain that catalyzes the reduction of oxygen to water. Electrons originating from reduced cytochrome c in the intermembrane space (IMS) are transferred via the dinuclear copper A center (CU(A)) of subunit 2 and heme A of subunit 1 to the active site in subunit 1, a binuclear center (BNC) formed by heme A3 and copper B (CU(B)). The BNC reduces molecular oxygen to 2 water molecules using 4 electrons from cytochrome c in the IMS and 4 protons from the mitochondrial matrix. In Nycticebus coucang (Slow loris), this protein is Cytochrome c oxidase subunit 2 (MT-CO2).